Here is a 146-residue protein sequence, read N- to C-terminus: Putative pre-16S rRNA nuclease (146 aa).

The protein belongs to the YqgF nuclease family.

The protein localises to the cytoplasm. Functionally, could be a nuclease involved in processing of the 5'-end of pre-16S rRNA. The chain is Putative pre-16S rRNA nuclease from Paraburkholderia xenovorans (strain LB400).